Consider the following 367-residue polypeptide: MSAPLANDTFLRALRRQPTDYTPLWLMRQAGRYLPEYNATRARAGSFLGLAKSPAYATEVTLQPLDRYALDAAILFSDILTVPDAMGLGLSFAQGEGPRFAKPVRTEADVAALSVPDMSSLQYVFDAVAEIRRALVQDGRQRVPLIGFSGSPWTLACYMVEGGGSDDFRTVKSMLYARPDLMHRILEINAQAVIDYLNAQIDAGAQAVQVFDTWGGALADGIYQQFSLAYMARVVEGIRAGADGQRVPVILFTKGGGLWLEAMAETGADALGVDWTVNLQLARQRTAGRVALQGNLDPTVLFAEPDAIRAQVRRVLEDYAAGGGSDGHIFNLGHGISQFTPPEAVSVLVDEVHSFSRALRTKARSHG.

Substrate-binding positions include 28–32 (RQAGR), Asp-78, Tyr-158, Thr-213, and His-334.

It belongs to the uroporphyrinogen decarboxylase family. Homodimer.

It is found in the cytoplasm. It catalyses the reaction uroporphyrinogen III + 4 H(+) = coproporphyrinogen III + 4 CO2. It participates in porphyrin-containing compound metabolism; protoporphyrin-IX biosynthesis; coproporphyrinogen-III from 5-aminolevulinate: step 4/4. Catalyzes the decarboxylation of four acetate groups of uroporphyrinogen-III to yield coproporphyrinogen-III. The protein is Uroporphyrinogen decarboxylase of Ralstonia pickettii (strain 12J).